A 417-amino-acid chain; its full sequence is Probable serine/threonine-protein kinase WNK9 (417 aa).

The segment at 1–23 is disordered; the sequence is MDLVEAEAEEQPPDEDGDEEGYV. In terms of domain architecture, Protein kinase spans 32–289; that stretch reads IRYDEIVGSG…ATELLKSSFL (258 aa). ATP is bound by residues 113–116 and K163; that span reads TELF. D180 (proton acceptor) is an active-site residue.

The protein belongs to the protein kinase superfamily. Ser/Thr protein kinase family. WNK subfamily.

The enzyme catalyses L-seryl-[protein] + ATP = O-phospho-L-seryl-[protein] + ADP + H(+). It catalyses the reaction L-threonyl-[protein] + ATP = O-phospho-L-threonyl-[protein] + ADP + H(+). This Oryza sativa subsp. japonica (Rice) protein is Probable serine/threonine-protein kinase WNK9 (WNK9).